The sequence spans 313 residues: Protein FixB (313 aa).

255-283 (LYLAVGISGQIQHMVGANASQTIFAINKD) is a binding site for FAD.

The protein belongs to the ETF alpha-subunit/FixB family. As to quaternary structure, heterodimer of FixA and FixB.

It functions in the pathway amine and polyamine metabolism; carnitine metabolism. Required for anaerobic carnitine reduction. May bring reductant to CaiA. This Escherichia coli O6:K15:H31 (strain 536 / UPEC) protein is Protein FixB.